The chain runs to 27 residues: Bombinin-like peptide 2 (27 aa).

Residue Asn27 is modified to Asparagine amide.

Belongs to the bombinin family. Expressed by the skin glands.

It localises to the secreted. Its function is as follows. Has antimicrobial activity, but no hemolytic activity. Preference on killing Gram-negative non-enteric bacteria. In Bombina orientalis (Oriental fire-bellied toad), this protein is Bombinin-like peptide 2.